Reading from the N-terminus, the 276-residue chain is 4-hydroxy-3-methylbut-2-enyl diphosphate reductase (276 aa).

Position 12 (Cys-12) interacts with [4Fe-4S] cluster. Residues His-36 and His-70 each contribute to the (2E)-4-hydroxy-3-methylbut-2-enyl diphosphate site. Dimethylallyl diphosphate contacts are provided by His-36 and His-70. Isopentenyl diphosphate-binding residues include His-36 and His-70. Cys-92 serves as a coordination point for [4Fe-4S] cluster. His-120 provides a ligand contact to (2E)-4-hydroxy-3-methylbut-2-enyl diphosphate. His-120 contacts dimethylallyl diphosphate. His-120 contacts isopentenyl diphosphate. Glu-122 serves as the catalytic Proton donor. Thr-158 is a (2E)-4-hydroxy-3-methylbut-2-enyl diphosphate binding site. Cys-186 is a binding site for [4Fe-4S] cluster. 4 residues coordinate (2E)-4-hydroxy-3-methylbut-2-enyl diphosphate: Ser-214, Ser-215, Asn-216, and Ser-258. Dimethylallyl diphosphate contacts are provided by Ser-214, Ser-215, Asn-216, and Ser-258. 4 residues coordinate isopentenyl diphosphate: Ser-214, Ser-215, Asn-216, and Ser-258.

It belongs to the IspH family. The cofactor is [4Fe-4S] cluster.

It catalyses the reaction isopentenyl diphosphate + 2 oxidized [2Fe-2S]-[ferredoxin] + H2O = (2E)-4-hydroxy-3-methylbut-2-enyl diphosphate + 2 reduced [2Fe-2S]-[ferredoxin] + 2 H(+). The catalysed reaction is dimethylallyl diphosphate + 2 oxidized [2Fe-2S]-[ferredoxin] + H2O = (2E)-4-hydroxy-3-methylbut-2-enyl diphosphate + 2 reduced [2Fe-2S]-[ferredoxin] + 2 H(+). It participates in isoprenoid biosynthesis; dimethylallyl diphosphate biosynthesis; dimethylallyl diphosphate from (2E)-4-hydroxy-3-methylbutenyl diphosphate: step 1/1. Its pathway is isoprenoid biosynthesis; isopentenyl diphosphate biosynthesis via DXP pathway; isopentenyl diphosphate from 1-deoxy-D-xylulose 5-phosphate: step 6/6. Catalyzes the conversion of 1-hydroxy-2-methyl-2-(E)-butenyl 4-diphosphate (HMBPP) into a mixture of isopentenyl diphosphate (IPP) and dimethylallyl diphosphate (DMAPP). Acts in the terminal step of the DOXP/MEP pathway for isoprenoid precursor biosynthesis. The protein is 4-hydroxy-3-methylbut-2-enyl diphosphate reductase of Wolinella succinogenes (strain ATCC 29543 / DSM 1740 / CCUG 13145 / JCM 31913 / LMG 7466 / NCTC 11488 / FDC 602W) (Vibrio succinogenes).